The following is a 478-amino-acid chain: MNVQPTKYHGLVLDLMPNIRLMQGFGHFLFRYVNGPVLIRKLYSWWNLIMILLQYFAIMGNLVMNTGDVNELTANTITTLFFTHSVTKFIYVAVNSEHFYRTLGIWNQPNSHSLFAESDARYHSIALAKMRKLLVMVMVTTVLSVVAWITITFFGDSVKNVFDKETNETYTVEIPRLPIKAWYPWDAMSGVPYFFSFIYQAYFLLFSMCQANLADVMFCSWLLFTCEQLQHLKGIMRPLMELSATLDTYRPNSAALFRVASAGSKSELILNEEKDPDTKDFDLNGIYNSKADWGAQFRAPSTLQTFGDNGINGNPNGLTKKQELMVRSAIKYWVERHKHVVRLVSAIGETYGAALLLHMLTSTIKLTLLAYQATKIDALNVYGLTVIGYLVYALAQVFLFCIFGNRLIEESSSVMEAAYSCHWYDGSEEAKTFVQIVCQQCQKAMTISGAKFFTVSLDLFASVLGAVVTYFMVLVQLK.

Residues 1–43 (MNVQPTKYHGLVLDLMPNIRLMQGFGHFLFRYVNGPVLIRKLY) are Cytoplasmic-facing. The helical transmembrane segment at 44–64 (SWWNLIMILLQYFAIMGNLVM) threads the bilayer. Residues 65–73 (NTGDVNELT) are Extracellular-facing. A helical membrane pass occupies residues 74-94 (ANTITTLFFTHSVTKFIYVAV). At 95-133 (NSEHFYRTLGIWNQPNSHSLFAESDARYHSIALAKMRKL) the chain is on the cytoplasmic side. Residues 134 to 154 (LVMVMVTTVLSVVAWITITFF) form a helical membrane-spanning segment. Residues 155–187 (GDSVKNVFDKETNETYTVEIPRLPIKAWYPWDA) lie on the Extracellular side of the membrane. A glycan (N-linked (GlcNAc...) asparagine) is linked at Asn-167. A helical membrane pass occupies residues 188–208 (MSGVPYFFSFIYQAYFLLFSM). Residues 209–343 (CQANLADVMF…VERHKHVVRL (135 aa)) are Cytoplasmic-facing. Residues 344-364 (VSAIGETYGAALLLHMLTSTI) form a helical membrane-spanning segment. Over 365 to 382 (KLTLLAYQATKIDALNVY) the chain is Extracellular. Residues 383–403 (GLTVIGYLVYALAQVFLFCIF) form a helical membrane-spanning segment. The Cytoplasmic portion of the chain corresponds to 404 to 454 (GNRLIEESSSVMEAAYSCHWYDGSEEAKTFVQIVCQQCQKAMTISGAKFFT). A helical membrane pass occupies residues 455–475 (VSLDLFASVLGAVVTYFMVLV). Residues 476–478 (QLK) are Extracellular-facing.

It belongs to the insect chemoreceptor superfamily. Heteromeric odorant receptor channel (TC 1.A.69) family. Orco subfamily. Heterodimer with conventional odorant receptors (ORs). Complexes exist early in the endomembrane system in olfactory sensory neurons (OSNs), coupling these complexes to the conserved ciliary trafficking pathway. In terms of tissue distribution, found specifically within most antennal and maxillary palp sensilla, as well as in a subset of proboscis sensilla.

It is found in the cell membrane. Its function is as follows. Odorant coreceptor which complexes with conventional odorant receptors (ORs) to form odorant-sensing units, providing sensitive and prolonged odorant signaling and calcium permeability. Orco is a universal and integral part of the functional odorant receptor, involved in the dendritic localization of other olfactory receptors. Plays a key role in preferred attraction of females for humans over non-human hosts for blood feeding. Human attraction plays a crucial role in the transmission of dengue and yellow fever by the mosquito. Also required for the response to the insect repellent IR3535; or to N,N-Diethyl-meta-toluamide (DEET), the most widely used insect repellent worldwide. The protein is Odorant receptor coreceptor (SGPRor7) of Aedes aegypti (Yellowfever mosquito).